A 549-amino-acid polypeptide reads, in one-letter code: MYCYQCEQTAQGVACVTVGLCGKTAEVAALQDLLIEAAKGLSQYAYRLRQLGIALPEIDAFVLDALFTTVTNVSFDPARLEEQLREAACLRDQLRARYDAACAARHTSPETLSGPALWQPASTRAGLVGTGEAASIAHRLTAQGADLTGLQDLLLYGVKGMAAYACHARILGQTDESVAAFVHEVLTTLAEVPADAEALLGLVLRCGTVSLTVLDLLDRANTGAYGDPQPTPVLMGHRAGKAILVSGHDLKDLAVLLEQTVGLGVDIYTHGEMLPAHGYPELKKYPHLVGHYGGAWQRQRSEFAAFPGPILMTTNCIQNPTAAYRDRLFTCGLVAHPEATALSGRNFAPLIASALAAPGFAEDGPVRHHLAGFGHKAVLGVAPQIIDAVKAGAIRRFVLIGGCDGHESARSYFDDLAGSLPQDAVVLTLGCGKFRVIDHDMGTIAGLPRLLDMGQCNDAYSAIKVAQALAEAFGVGVNDLPLSLVLSWFEQKAVTVLLALLALGVRNIRLGPNLPAFITPPVLKVLVDRFGIMPVGTVAEDLAAMGLAA.

Residues Cys-3, Cys-6, Cys-15, and Cys-21 each coordinate [4Fe-4S] cluster. Hybrid [4Fe-2O-2S] cluster is bound by residues His-248, Glu-272, Cys-316, Cys-403, Cys-431, Cys-456, Glu-490, and Lys-492. At Cys-403 the chain carries Cysteine persulfide.

Belongs to the HCP family. Requires [4Fe-4S] cluster as cofactor. The cofactor is hybrid [4Fe-2O-2S] cluster.

The protein resides in the cytoplasm. The enzyme catalyses A + NH4(+) + H2O = hydroxylamine + AH2 + H(+). Catalyzes the reduction of hydroxylamine to form NH(3) and H(2)O. The chain is Hydroxylamine reductase from Rhodospirillum rubrum (strain ATCC 11170 / ATH 1.1.1 / DSM 467 / LMG 4362 / NCIMB 8255 / S1).